A 421-amino-acid polypeptide reads, in one-letter code: Na(+)/H(+) antiporter NhaA 1 (421 aa).

The next 11 membrane-spanning stretches (helical) occupy residues 48 to 68, 93 to 113, 129 to 149, 157 to 177, 187 to 207, 215 to 235, 253 to 273, 299 to 319, 326 to 346, 364 to 384, and 392 to 412; these read SSGLVLILAAVLAFAWANSPW, LYWWVNDLLMALFFLLVGLEI, SLALFAALGGMLLPAGLYTLV, AGWGVPMATDIAFALGVLALL, VLLAALAILDDLGAVLVIALF, LALGLMGAVWALGLGLNAAGV, LASGLHPTVAGVLLALTIPLG, FLILPLFALFNAGVSVAGGSL, VVLGLIIGKPLGVVAFAWLAV, GLGLLAGIGFTMALFIGGLAF, and AAKLGILTASVLAALAAITVL.

The protein belongs to the NhaA Na(+)/H(+) (TC 2.A.33) antiporter family.

It localises to the cell membrane. It carries out the reaction Na(+)(in) + 2 H(+)(out) = Na(+)(out) + 2 H(+)(in). Functionally, na(+)/H(+) antiporter that extrudes sodium in exchange for external protons. The chain is Na(+)/H(+) antiporter NhaA 1 from Deinococcus geothermalis (strain DSM 11300 / CIP 105573 / AG-3a).